The following is a 101-amino-acid chain: Large ribosomal subunit protein uL6m (101 aa).

The protein belongs to the universal ribosomal protein uL6 family.

It localises to the mitochondrion. This is Large ribosomal subunit protein uL6m (RPL6) from Marchantia polymorpha (Common liverwort).